Reading from the N-terminus, the 127-residue chain is MIELDYLTIAFGGAIGAVLRYLVSRTINSLLPFSYIPLGTIIVNSVGSFFLSFLMFAAIEKVPLSKEAILFFGTGLLGAFTTFSTFTYETLSLIEESPARGVAYALANLLFAFTCAYFGMILGRGKV.

Transmembrane regions (helical) follow at residues 4–24, 39–59, 68–88, and 102–122; these read LDYL…YLVS, GTII…FAAI, AILF…TFTY, and VAYA…GMIL. Glycine 78 and threonine 81 together coordinate Na(+).

Belongs to the fluoride channel Fluc/FEX (TC 1.A.43) family.

Its subcellular location is the cell inner membrane. The catalysed reaction is fluoride(in) = fluoride(out). With respect to regulation, na(+) is not transported, but it plays an essential structural role and its presence is essential for fluoride channel function. In terms of biological role, fluoride-specific ion channel. Important for reducing fluoride concentration in the cell, thus reducing its toxicity. The sequence is that of Fluoride-specific ion channel FluC from Thermotoga maritima (strain ATCC 43589 / DSM 3109 / JCM 10099 / NBRC 100826 / MSB8).